The following is a 669-amino-acid chain: Epithelial sodium channel subunit alpha (669 aa).

The interval 1 to 43 is disordered; sequence MEGNKLEEQDSSPPQSTPGLMKGNKREEQGLGPEPAAPQQPTA. Over 1 to 85 the chain is Cytoplasmic; the sequence is MEGNKLEEQD…CSQHNRMKTA (85 aa). Residues 33-42 are compositionally biased toward low complexity; sequence PEPAAPQQPT. A helical transmembrane segment spans residues 86–106; that stretch reads FWAVLWLCTFGMMYWQFGLLF. Topologically, residues 107-562 are extracellular; that stretch reads GEYFSYPVSL…SQWSLWFGSS (456 aa). 10 disulfide bridges follow: C133-C305, C229-C236, C282-C289, C394-C479, C416-C456, C416-C475, C420-C471, C429-C456, C429-C479, and C431-C445. The tract at residues 175–243 is gating release of inhibition by proteolysis (GRIP); protease-sensitive region that is responsible for the proteolytic activation of the channel; the sequence is RSRRDLRGTL…SDCFYQTYSS (69 aa). The helical transmembrane segment at 563–583 threads the bilayer; it reads VLSVVEMAELVFDLLVIMFLM. Over 584–669 the chain is Cytoplasmic; that stretch reads LLRRFRSRYW…SSSTCPLGGP (86 aa). A disordered region spans residues 620–669; it reads HPMSLSLSQPGPAPSPALTAPPPAYATLGPRPSPGGSAGASSSTCPLGGP. A compositionally biased stretch (pro residues) spans 630 to 643; that stretch reads GPAPSPALTAPPPA. Residues 640–644 carry the PY motif; recruits WW domain-containing proteins and is thereby required for ubiquitination and inhibition of the channel by NEDD4 and NEDD4L motif; sequence PPPAY.

It belongs to the amiloride-sensitive sodium channel (TC 1.A.6) family. SCNN1A subfamily. In terms of assembly, heterotrimer; containing an alpha/SCNN1A, a beta/SCNN1B and a gamma/SCNN1G subunit. Interacts with WWP1 (via WW domains). Interacts with WWP2 (via WW domains); inhibits the channel. Interacts with BPIFA1; the interaction is indirect via SCNN1B and inhibits the proteolytic processing of SCNN1A and SCNN1G and the activation of ENaC. Interacts with the full-length immature form of PCSK9 (pro-PCSK9); inhibits ENaC by promoting its proteasomal degradation. Post-translationally, ubiquitinated. Can be ubiquitinated at multiple sites and undergo monoubiquitination and polyubiquitination. Ubiquitination by NEDD4 or NEDD4L inhibits the ENaC channel through endocytosis, intracellular retention and degradation of its individual subunits. ENaC is activated through the proteolytic maturation of its subunits. Furin cleaves the SCNN1A subunit, which results in a stepwise increase in the open probability of the channel due to the release of an inhibitory tract. BPIFA1, which is recruited by the SCNN1B subunit, prevents the proteolytic activation of ENaC. In terms of processing, N-glycosylated. Expressed in the female reproductive tract, from the fimbrial end of the fallopian tube to the endometrium (at protein level). Expressed in kidney (at protein level). In the respiratory tract, expressed in the bronchial epithelium (at protein level). Highly expressed in lung. Detected at intermediate levels in pancreas and liver, and at low levels in heart and placenta. in skin, expressed in keratinocytes, melanocytes and Merkel cells of the epidermal sub-layers, stratum basale, stratum spinosum and stratum granulosum (at protein level). Expressed in the outer root sheath of the hair follicles (at protein level). Detected in both peripheral and central cells of the sebaceous gland (at protein level). Expressed by eccrine sweat glands (at protein level). In skin, also expressed by arrector pili muscle cells and intradermal adipocytes. Isoform 1 and isoform 2 predominate in all tissues. In terms of tissue distribution, detected in lung and heart.

It is found in the apical cell membrane. It localises to the cell projection. The protein localises to the cilium. The protein resides in the cytoplasmic granule. Its subcellular location is the cytoplasm. It is found in the cytoplasmic vesicle. It localises to the secretory vesicle. The protein localises to the acrosome. The protein resides in the flagellum. The catalysed reaction is Na(+)(in) = Na(+)(out). Originally identified and characterized by its inhibition by the diuretic drug amiloride. Inhibited by phenamil. Functionally, this is one of the three pore-forming subunits of the heterotrimeric epithelial sodium channel (ENaC), a critical regulator of sodium balance and fluid homeostasis. ENaC operates in epithelial tissues, where it mediates the electrodiffusion of sodium ions from extracellular fluid through the apical membrane of cells, with water following osmotically. It plays a key role in maintaining sodium homeostasis through electrogenic sodium reabsorption in the kidneys. Additionally, ENaC is essential for airway surface liquid homeostasis, which is crucial for proper mucus clearance. Not functional. The polypeptide is Epithelial sodium channel subunit alpha (Homo sapiens (Human)).